The following is a 466-amino-acid chain: Ribulose bisphosphate carboxylase large chain (466 aa).

Lys4 carries the post-translational modification N6,N6,N6-trimethyllysine. The substrate site is built by Asn113 and Thr163. The Proton acceptor role is filled by Lys165. A substrate-binding site is contributed by Lys167. Mg(2+) contacts are provided by Lys191, Asp193, and Glu194. Lys191 is modified (N6-carboxylysine). The Proton acceptor role is filled by His284. Positions 285, 317, and 369 each coordinate substrate.

It belongs to the RuBisCO large chain family. Type I subfamily. In terms of assembly, heterohexadecamer of 8 large chains and 8 small chains; disulfide-linked. The disulfide link is formed within the large subunit homodimers. It depends on Mg(2+) as a cofactor. The disulfide bond which can form in the large chain dimeric partners within the hexadecamer appears to be associated with oxidative stress and protein turnover.

Its subcellular location is the plastid. It localises to the chloroplast. The catalysed reaction is 2 (2R)-3-phosphoglycerate + 2 H(+) = D-ribulose 1,5-bisphosphate + CO2 + H2O. It catalyses the reaction D-ribulose 1,5-bisphosphate + O2 = 2-phosphoglycolate + (2R)-3-phosphoglycerate + 2 H(+). Its function is as follows. RuBisCO catalyzes two reactions: the carboxylation of D-ribulose 1,5-bisphosphate, the primary event in carbon dioxide fixation, as well as the oxidative fragmentation of the pentose substrate in the photorespiration process. Both reactions occur simultaneously and in competition at the same active site. In Ruttya fruticosa (African azalea), this protein is Ribulose bisphosphate carboxylase large chain.